We begin with the raw amino-acid sequence, 259 residues long: Ribonuclease HII (259 aa).

One can recognise an RNase H type-2 domain in the interval 70 to 258; that stretch reads TLIAGIDEVG…VKSLVLGKKE (189 aa). A divalent metal cation contacts are provided by Asp76, Glu77, and Asp168.

This sequence belongs to the RNase HII family. Requires Mn(2+) as cofactor. It depends on Mg(2+) as a cofactor.

Its subcellular location is the cytoplasm. The enzyme catalyses Endonucleolytic cleavage to 5'-phosphomonoester.. Functionally, endonuclease that specifically degrades the RNA of RNA-DNA hybrids. The chain is Ribonuclease HII from Streptococcus pneumoniae (strain 70585).